The primary structure comprises 542 residues: uncharacterized protein (542 aa).

Over M1–D78 the chain is Extracellular. The chain crosses the membrane as a helical span at residues L79 to I99. The Cytoplasmic segment spans residues A100–N119. A helical membrane pass occupies residues L120 to S140. The Extracellular segment spans residues K141 to R147. The chain crosses the membrane as a helical span at residues V148–N168. Topologically, residues R169–R176 are cytoplasmic. Residues C177 to Y197 traverse the membrane as a helical segment. The Extracellular segment spans residues Y198–S208. A helical transmembrane segment spans residues F209–I229. Residues E230–Q241 are Cytoplasmic-facing. The helical transmembrane segment at Y242–M262 threads the bilayer. Residues R263–L326 are Extracellular-facing. The helical transmembrane segment at F327–I347 threads the bilayer. Topologically, residues L348–N359 are cytoplasmic. Residues I360 to S380 form a helical membrane-spanning segment. The Extracellular segment spans residues R381–S387. Residues L388 to P408 traverse the membrane as a helical segment. Residues T409–K416 are Cytoplasmic-facing. The helical transmembrane segment at Y417–V437 threads the bilayer. At S438–K482 the chain is on the extracellular side. Residues I483–I503 form a helical membrane-spanning segment. The Cytoplasmic segment spans residues S504–H542.

Belongs to the major facilitator superfamily. Allantoate permease family.

It localises to the membrane. This is an uncharacterized protein from Saccharomyces cerevisiae (strain ATCC 204508 / S288c) (Baker's yeast).